The primary structure comprises 219 residues: Thymidylate kinase (219 aa).

7–14 (GIDGAGKS) serves as a coordination point for ATP.

Belongs to the thymidylate kinase family.

The enzyme catalyses dTMP + ATP = dTDP + ADP. Phosphorylation of dTMP to form dTDP in both de novo and salvage pathways of dTTP synthesis. This is Thymidylate kinase from Chlorobium phaeobacteroides (strain DSM 266 / SMG 266 / 2430).